The sequence spans 436 residues: Mannitol-binding protein (436 aa).

Residues 1-22 form the signal peptide; it reads MNDSIKACLAAACLALPLLAQG.

The protein belongs to the bacterial solute-binding protein 1 family.

The protein localises to the periplasm. In terms of biological role, binds mannitol with high affinity. In Pseudomonas aeruginosa (strain ATCC 15692 / DSM 22644 / CIP 104116 / JCM 14847 / LMG 12228 / 1C / PRS 101 / PAO1), this protein is Mannitol-binding protein.